Here is a 207-residue protein sequence, read N- to C-terminus: MPTLQNARGVYLITPDTRDTAQLLACTLPLLPHITWLQYRNKQADAALRLAQATALRAACTAHGVPLIINDDAALAQQVGADGVHLGEDDGEVAAARALLGASAIIGVSCYDEIERARAAAAAGANYVAFGAFFPTATKVTTRRATPALLHEAAALGLPRVAIGGITPSQVPELVTAGADLIAVVSGVYAAADPVAAVQAYRAGFTQ.

4-amino-2-methyl-5-(diphosphooxymethyl)pyrimidine is bound by residues 38–42 (QYRNK) and Asn-70. Residues Asp-71 and Asp-90 each contribute to the Mg(2+) site. Ser-109 serves as a coordination point for 4-amino-2-methyl-5-(diphosphooxymethyl)pyrimidine. 2-[(2R,5Z)-2-carboxy-4-methylthiazol-5(2H)-ylidene]ethyl phosphate is bound at residue 136–138 (TAT). Lys-139 contacts 4-amino-2-methyl-5-(diphosphooxymethyl)pyrimidine. Residues Gly-165 and 185–186 (VS) contribute to the 2-[(2R,5Z)-2-carboxy-4-methylthiazol-5(2H)-ylidene]ethyl phosphate site.

Belongs to the thiamine-phosphate synthase family. The cofactor is Mg(2+).

The enzyme catalyses 2-[(2R,5Z)-2-carboxy-4-methylthiazol-5(2H)-ylidene]ethyl phosphate + 4-amino-2-methyl-5-(diphosphooxymethyl)pyrimidine + 2 H(+) = thiamine phosphate + CO2 + diphosphate. It carries out the reaction 2-(2-carboxy-4-methylthiazol-5-yl)ethyl phosphate + 4-amino-2-methyl-5-(diphosphooxymethyl)pyrimidine + 2 H(+) = thiamine phosphate + CO2 + diphosphate. It catalyses the reaction 4-methyl-5-(2-phosphooxyethyl)-thiazole + 4-amino-2-methyl-5-(diphosphooxymethyl)pyrimidine + H(+) = thiamine phosphate + diphosphate. It participates in cofactor biosynthesis; thiamine diphosphate biosynthesis; thiamine phosphate from 4-amino-2-methyl-5-diphosphomethylpyrimidine and 4-methyl-5-(2-phosphoethyl)-thiazole: step 1/1. Functionally, condenses 4-methyl-5-(beta-hydroxyethyl)thiazole monophosphate (THZ-P) and 2-methyl-4-amino-5-hydroxymethyl pyrimidine pyrophosphate (HMP-PP) to form thiamine monophosphate (TMP). The polypeptide is Thiamine-phosphate synthase (Xanthomonas campestris pv. campestris (strain 8004)).